The chain runs to 102 residues: NADH-quinone oxidoreductase subunit K (102 aa).

3 consecutive transmembrane segments (helical) span residues 5-25, 31-51, and 66-86; these read LEHYLTVAAILFTLGIFGIFL, IVILMSIELMLLAVNINLVAF, and FVLTVAAAEAAIGLAILVVFF.

Belongs to the complex I subunit 4L family. As to quaternary structure, NDH-1 is composed of 14 different subunits. Subunits NuoA, H, J, K, L, M, N constitute the membrane sector of the complex.

It is found in the cell inner membrane. It carries out the reaction a quinone + NADH + 5 H(+)(in) = a quinol + NAD(+) + 4 H(+)(out). Its function is as follows. NDH-1 shuttles electrons from NADH, via FMN and iron-sulfur (Fe-S) centers, to quinones in the respiratory chain. The immediate electron acceptor for the enzyme in this species is believed to be ubiquinone. Couples the redox reaction to proton translocation (for every two electrons transferred, four hydrogen ions are translocated across the cytoplasmic membrane), and thus conserves the redox energy in a proton gradient. This is NADH-quinone oxidoreductase subunit K from Parvibaculum lavamentivorans (strain DS-1 / DSM 13023 / NCIMB 13966).